Here is a 158-residue protein sequence, read N- to C-terminus: SsrA-binding protein (158 aa).

It belongs to the SmpB family.

The protein localises to the cytoplasm. Functionally, required for rescue of stalled ribosomes mediated by trans-translation. Binds to transfer-messenger RNA (tmRNA), required for stable association of tmRNA with ribosomes. tmRNA and SmpB together mimic tRNA shape, replacing the anticodon stem-loop with SmpB. tmRNA is encoded by the ssrA gene; the 2 termini fold to resemble tRNA(Ala) and it encodes a 'tag peptide', a short internal open reading frame. During trans-translation Ala-aminoacylated tmRNA acts like a tRNA, entering the A-site of stalled ribosomes, displacing the stalled mRNA. The ribosome then switches to translate the ORF on the tmRNA; the nascent peptide is terminated with the 'tag peptide' encoded by the tmRNA and targeted for degradation. The ribosome is freed to recommence translation, which seems to be the essential function of trans-translation. The chain is SsrA-binding protein from Psychrobacter sp. (strain PRwf-1).